Consider the following 294-residue polypeptide: MSDAAAAPPERKKRTITEIRDSKKSGEKMVYTSVPDYTSAKWAELAGVDVAVVGDSLAMVAHGHSSTVPATMDMMVMHAQAVRRGAPRTFTLGCMPYQSYNTVDRALLNATRFMQDGGCDAVKPQGGRSQAHILKALVDSGIPTASHIGLTPHTIAMFGGFKIQGRTAEAAMKILEDAFAIQDAGCFMLEFEAVPAKIATLISKQLEIPTIGIGAGAGCDGQILLSYDLLGVFTDFKPKFTKRYANLTEVAVQGLKAYVDEVKTGRFPDDDHSYGVDDREYEQFMNLVEKRRHV.

D55 contributes to the Mg(2+) binding site. 3-methyl-2-oxobutanoate contacts are provided by residues 55 to 56 and K123; that span reads DS. The Proton acceptor role is filled by E192.

This sequence belongs to the PanB family. As to quaternary structure, homodecamer; pentamer of dimers. Mg(2+) is required as a cofactor.

The protein resides in the cytoplasm. It catalyses the reaction 3-methyl-2-oxobutanoate + (6R)-5,10-methylene-5,6,7,8-tetrahydrofolate + H2O = 2-dehydropantoate + (6S)-5,6,7,8-tetrahydrofolate. The protein operates within cofactor biosynthesis; (R)-pantothenate biosynthesis; (R)-pantoate from 3-methyl-2-oxobutanoate: step 1/2. Functionally, catalyzes the reversible reaction in which hydroxymethyl group from 5,10-methylenetetrahydrofolate is transferred onto alpha-ketoisovalerate to form ketopantoate. The polypeptide is 3-methyl-2-oxobutanoate hydroxymethyltransferase 1 (Methylibium petroleiphilum (strain ATCC BAA-1232 / LMG 22953 / PM1)).